The chain runs to 379 residues: Guanine nucleotide-binding protein subunit alpha-12 (379 aa).

Residue Cys-11 is the site of S-palmitoyl cysteine attachment. One can recognise a G-alpha domain in the interval 54–379 (RLVKILLLGA…QENLKDIMLQ (326 aa)). The tract at residues 57–70 (KILLLGAGESGKST) is G1 motif. Residues 65–70 (ESGKST) and 200–203 (LLAR) each bind GTP. Ser-69 contributes to the Mg(2+) binding site. The segment at 198–206 (DILLARKAT) is G2 motif. Thr-206 is a Mg(2+) binding site. Thr-206 carries the phosphothreonine modification. The tract at residues 221 to 230 (FKMVDVGGQR) is G3 motif. Positions 290-297 (ILFLNKMD) are G4 motif. Residues 294–297 (NKMD) and Ala-351 each bind GTP. Positions 349 to 354 (TTAIDT) are G5 motif.

It belongs to the G-alpha family. G(12) subfamily. As to quaternary structure, g proteins are composed of 3 units; alpha, beta and gamma. The alpha chain contains the guanine nucleotide binding site. Interacts with UBXD5. Interacts (in GTP-bound form) with PPP5C (via TPR repeats); activates PPP5C phosphatase activity and translocates PPP5C to the cell membrane. Interacts with RGS22. Interacts (via N-terminus) with NAPA; the interaction promotes CDH5 localization to plasma membrane. Interacts with CTNND1 (via N-terminus); the interaction regulates CDH1-mediated cell-cell adhesion. Interacts with PPP2R1A; the interaction promotes protein phosphatase 2A activation causing dephosphorylation of MAPT. Interacts (in GTP-bound form) with ARHGEF1. Interacts (in GTP-bound form) with ARHGEF11 (via RGS domain). Interacts (in GTP-bound form) with ARHGEF12 (via RGS domain).

The protein resides in the cell membrane. It is found in the lateral cell membrane. The protein localises to the cytoplasm. Guanine nucleotide-binding proteins (G proteins) are involved as modulators or transducers in various transmembrane signaling systems. Activates effector molecule RhoA by binding and activating RhoGEFs (ARHGEF12/LARG). GNA12-dependent Rho signaling subsequently regulates transcription factor AP-1 (activating protein-1). GNA12-dependent Rho signaling also regulates protein phosphatese 2A activation causing dephosphorylation of its target proteins. Promotes tumor cell invasion and metastasis by activating RhoA/ROCK signaling pathway and up-regulating pro-inflammatory cytokine production. Inhibits CDH1-mediated cell adhesion in process independent from Rho activation. Together with NAPA promotes CDH5 localization to plasma membrane. May play a role in the control of cell migration through the TOR signaling cascade. This Rattus norvegicus (Rat) protein is Guanine nucleotide-binding protein subunit alpha-12 (Gna12).